The sequence spans 269 residues: Formamidopyrimidine-DNA glycosylase (269 aa).

Pro-2 serves as the catalytic Schiff-base intermediate with DNA. Glu-3 functions as the Proton donor in the catalytic mechanism. Lys-57 acts as the Proton donor; for beta-elimination activity in catalysis. 3 residues coordinate DNA: His-90, Arg-109, and Lys-150. Residues 235–269 form an FPG-type zinc finger; the sequence is QVYGKAGESCPECGEAIQELKIGQRNTFYCSYCQC. The Proton donor; for delta-elimination activity role is filled by Arg-259.

Belongs to the FPG family. Monomer. Requires Zn(2+) as cofactor.

It carries out the reaction Hydrolysis of DNA containing ring-opened 7-methylguanine residues, releasing 2,6-diamino-4-hydroxy-5-(N-methyl)formamidopyrimidine.. It catalyses the reaction 2'-deoxyribonucleotide-(2'-deoxyribose 5'-phosphate)-2'-deoxyribonucleotide-DNA = a 3'-end 2'-deoxyribonucleotide-(2,3-dehydro-2,3-deoxyribose 5'-phosphate)-DNA + a 5'-end 5'-phospho-2'-deoxyribonucleoside-DNA + H(+). Its function is as follows. Involved in base excision repair of DNA damaged by oxidation or by mutagenic agents. Acts as a DNA glycosylase that recognizes and removes damaged bases. Has a preference for oxidized purines, such as 7,8-dihydro-8-oxoguanine (8-oxoG). Has AP (apurinic/apyrimidinic) lyase activity and introduces nicks in the DNA strand. Cleaves the DNA backbone by beta-delta elimination to generate a single-strand break at the site of the removed base with both 3'- and 5'-phosphates. The chain is Formamidopyrimidine-DNA glycosylase from Vibrio vulnificus (strain YJ016).